The primary structure comprises 320 residues: Ribosomal RNA small subunit methyltransferase H (320 aa).

Residues 42-44 (GGH), Asp62, Phe86, Asp108, and Gln115 contribute to the S-adenosyl-L-methionine site.

Belongs to the methyltransferase superfamily. RsmH family.

It localises to the cytoplasm. The catalysed reaction is cytidine(1402) in 16S rRNA + S-adenosyl-L-methionine = N(4)-methylcytidine(1402) in 16S rRNA + S-adenosyl-L-homocysteine + H(+). In terms of biological role, specifically methylates the N4 position of cytidine in position 1402 (C1402) of 16S rRNA. The polypeptide is Ribosomal RNA small subunit methyltransferase H (Yersinia enterocolitica serotype O:8 / biotype 1B (strain NCTC 13174 / 8081)).